Reading from the N-terminus, the 210-residue chain is Cell division protein SepF (210 aa).

The tract at residues 13-101 is disordered; sequence GLADGDEYDE…EPVDPGYRAP (89 aa). Composition is skewed to basic and acidic residues over residues 22–70 and 83–93; these read EQPR…ERPE and VEPRRPARPEP.

The protein belongs to the SepF family. As to quaternary structure, homodimer. Interacts with FtsZ.

It is found in the cytoplasm. In terms of biological role, cell division protein that is part of the divisome complex and is recruited early to the Z-ring. Probably stimulates Z-ring formation, perhaps through the cross-linking of FtsZ protofilaments. Its function overlaps with FtsA. The chain is Cell division protein SepF from Micrococcus luteus (strain ATCC 4698 / DSM 20030 / JCM 1464 / CCM 169 / CCUG 5858 / IAM 1056 / NBRC 3333 / NCIMB 9278 / NCTC 2665 / VKM Ac-2230) (Micrococcus lysodeikticus).